The chain runs to 366 residues: Carbamoyl phosphate synthase small chain (366 aa).

The interval 1-171 (MLEKRYLVLE…KTPYVSTGSD (171 aa)) is CPSase. L-glutamine is bound by residues S47, G221, and G223. Positions 173–360 (SVVLLDFGKK…ITMMKDFKEK (188 aa)) constitute a Glutamine amidotransferase type-1 domain. Residue C248 is the Nucleophile of the active site. L-glutamine is bound by residues L249, Q252, N290, G292, and Y293. Residues H333 and E335 contribute to the active site.

The protein belongs to the CarA family. In terms of assembly, composed of two chains; the small (or glutamine) chain promotes the hydrolysis of glutamine to ammonia, which is used by the large (or ammonia) chain to synthesize carbamoyl phosphate. Tetramer of heterodimers (alpha,beta)4.

The catalysed reaction is hydrogencarbonate + L-glutamine + 2 ATP + H2O = carbamoyl phosphate + L-glutamate + 2 ADP + phosphate + 2 H(+). The enzyme catalyses L-glutamine + H2O = L-glutamate + NH4(+). Its pathway is amino-acid biosynthesis; L-arginine biosynthesis; carbamoyl phosphate from bicarbonate: step 1/1. It participates in pyrimidine metabolism; UMP biosynthesis via de novo pathway; (S)-dihydroorotate from bicarbonate: step 1/3. Small subunit of the glutamine-dependent carbamoyl phosphate synthetase (CPSase). CPSase catalyzes the formation of carbamoyl phosphate from the ammonia moiety of glutamine, carbonate, and phosphate donated by ATP, constituting the first step of 2 biosynthetic pathways, one leading to arginine and/or urea and the other to pyrimidine nucleotides. The small subunit (glutamine amidotransferase) binds and cleaves glutamine to supply the large subunit with the substrate ammonia. This is Carbamoyl phosphate synthase small chain from Staphylococcus epidermidis (strain ATCC 35984 / DSM 28319 / BCRC 17069 / CCUG 31568 / BM 3577 / RP62A).